The sequence spans 412 residues: Palmitoyl-acyl carrier protein thioesterase, chloroplastic (412 aa).

2 stretches are compositionally biased toward polar residues: residues 1–19 (MVAT…SSLD) and 27–40 (IGST…SAPN). The transit peptide at 1–49 (MVATSATSSFFPVPSSSLDPNGKGNKIGSTNLAGLNSAPNSGRMKVKPN) directs the protein to the chloroplast. Residues 1 to 64 (MVATSATSSF…KINGKKVGLP (64 aa)) form a disordered region. Active-site residues include Asn315, His317, and Cys352.

Belongs to the acyl-ACP thioesterase family. Highly expressed in flowers. Expressed in roots, leaves, stems, siliques and seeds.

The protein resides in the plastid. Its subcellular location is the chloroplast. The catalysed reaction is hexadecanoyl-[ACP] + H2O = hexadecanoate + holo-[ACP] + H(+). Plays an essential role in chain termination during de novo fatty acid synthesis. Possesses high thioesterase activity for palmitoyl-ACP versus other acyl-ACPs. Substrate preference is 16:0 &gt; 18:1 &gt; 18:0 &gt; 16:1. Plays an essential role in the supply of saturated fatty acids necessary for plant growth and seed development. Contributes to 16:0 production particularly in flowers. May be involved in the synthesis of long chain fatty acid. In Arabidopsis thaliana (Mouse-ear cress), this protein is Palmitoyl-acyl carrier protein thioesterase, chloroplastic (FATB).